The chain runs to 145 residues: MKALIQRVAKAQVTVAGEEVGAIGPGLLALVGIEPQDDRESIGRMLHRLLNYRVFADAEGRMNLSLAQLGGGLLLVSQFTLAADTRSGLRPSFSSAAPPAQGQALFEALLALARERHPQVAGGRFGAHMRVELVNDGPVTFLLEA.

The short motif at 137 to 138 is the Gly-cisPro motif, important for rejection of L-amino acids element; sequence GP.

The protein belongs to the DTD family. Homodimer.

The protein resides in the cytoplasm. The catalysed reaction is glycyl-tRNA(Ala) + H2O = tRNA(Ala) + glycine + H(+). It catalyses the reaction a D-aminoacyl-tRNA + H2O = a tRNA + a D-alpha-amino acid + H(+). Functionally, an aminoacyl-tRNA editing enzyme that deacylates mischarged D-aminoacyl-tRNAs. Also deacylates mischarged glycyl-tRNA(Ala), protecting cells against glycine mischarging by AlaRS. Acts via tRNA-based rather than protein-based catalysis; rejects L-amino acids rather than detecting D-amino acids in the active site. By recycling D-aminoacyl-tRNA to D-amino acids and free tRNA molecules, this enzyme counteracts the toxicity associated with the formation of D-aminoacyl-tRNA entities in vivo and helps enforce protein L-homochirality. The polypeptide is D-aminoacyl-tRNA deacylase (Azotobacter vinelandii (strain DJ / ATCC BAA-1303)).